Consider the following 462-residue polypeptide: MGSTEQATSRVRGAARTSAQLFEAACSVIPGGVNSPVRAFTAVGGTPRFITEAHGCWLIDADGNRYVDLVCSWGPMILGHAHPAVVEAVAKAAARGLSFGAPTPAETQLAGEIIGRVAPVERIRLVNSGTEATMSAVRLARGFTGRAKIVKFSGCYHGHVDALLADAGSGVATLGLCDDPQRPASPRSQSSRGLPSSPGVTGAAAADTIVLPYNDIDAVQQTFARFGEQIAAVITEASPGNMGVVPPGPGFNAALRAITAEHGALLILDEVMTGFRVSRSGWYGIDPVPADLFAFGKVMSGGMPAAAFGGRAEVMQRLAPLGPVYQAGTLSGNPVAVAAGLATLRAADDAVYTALDANADRLAGLLSEALTDAVVPHQISRAGNMLSVFFGETPVTDFASARASQTWRYPAFFHAMLDAGVYPPCSAFEAWFVSAALDDAAFGRIANALPAAARAAAQERPA.

The interval 178-200 is disordered; it reads DDPQRPASPRSQSSRGLPSSPGV. Low complexity predominate over residues 182 to 192; that stretch reads RPASPRSQSSR. Lysine 297 carries the post-translational modification N6-(pyridoxal phosphate)lysine.

The protein belongs to the class-III pyridoxal-phosphate-dependent aminotransferase family. HemL subfamily. Homodimer. Requires pyridoxal 5'-phosphate as cofactor.

The protein resides in the cytoplasm. It catalyses the reaction (S)-4-amino-5-oxopentanoate = 5-aminolevulinate. It participates in porphyrin-containing compound metabolism; protoporphyrin-IX biosynthesis; 5-aminolevulinate from L-glutamyl-tRNA(Glu): step 2/2. The polypeptide is Glutamate-1-semialdehyde 2,1-aminomutase (hemL) (Mycobacterium bovis (strain ATCC BAA-935 / AF2122/97)).